Here is a 173-residue protein sequence, read N- to C-terminus: Chromophore lyase CpcS/CpeS 3 (173 aa).

Belongs to the CpcS/CpeS biliprotein lyase family.

In terms of biological role, covalently attaches a chromophore to Cys residue(s) of phycobiliproteins. This is Chromophore lyase CpcS/CpeS 3 from Trichodesmium erythraeum (strain IMS101).